The chain runs to 584 residues: MAPAAMNLLCTVLYLLSSFAQVSDAAPWLFSRSIPASYHDGRLGAVASENSMCSEYGADMLKIGGNAADAVCIYRLSLFFAFLPYPALQEDRAMYHSGIGGGGFMLIRAPNGTYEFIDFRETAPAAAFQDMFKNNTSGSTSGGLASGVPGEVRGLEYLHKNYGKLPWKTVMEPAIRTARDGFRVTEDLSRIMLHSTKNGNFLAENAAWALDFAPQGTLLKVGDIITRRRYGDTLDKIAKYGADAFYTGPMAQAMVNALRAANGTMTLEDLKNYTVVSRPTAQIEYRGMTVTSTTAPSSGVVLLSILKLLNGYKNFFRMDPGPLSTHRMDEAIRFGYGQRTELGDPLFFSNLTDYQKKMISDEAANKNRMNISDEYTQDIAVYDPKGLESLNTPGTSHISTADRSGMAVSLTTTINLYFGSRVIVPETGIIMNNEMDDFSVPGRSNSFGYKPSPSNFIRPGKRPLSSICPTIITRPDGSLYFVSGAAGGSQIITGTLQSVINVMDRKMNVRQALKAPRLHDQLVPNVALMEDEFDKKTVDFMISRKHNVTREKSGSTVESIMRLKNGVFEASGEPRLANSGGVVV.

The N-terminal stretch at 1–25 (MAPAAMNLLCTVLYLLSSFAQVSDA) is a signal peptide. N-linked (GlcNAc...) asparagine glycosylation is present at asparagine 111. Arginine 120 provides a ligand contact to L-glutamate. Asparagine 135, asparagine 262, asparagine 272, asparagine 350, and asparagine 370 each carry an N-linked (GlcNAc...) asparagine glycan. Catalysis depends on threonine 395, which acts as the Nucleophile. Residues threonine 413, glutamate 434, and 465–466 (SS) contribute to the L-glutamate site. A glycan (N-linked (GlcNAc...) asparagine) is linked at asparagine 547.

It belongs to the gamma-glutamyltransferase family. Heterodimer composed of the light and heavy chains. The active site is located in the light chain. Cleaved by autocatalysis into a large and a small subunit and the autocatalytic cleavage is essential to the functional activation of the enzyme.

It is found in the secreted. The catalysed reaction is an N-terminal (5-L-glutamyl)-[peptide] + an alpha-amino acid = 5-L-glutamyl amino acid + an N-terminal L-alpha-aminoacyl-[peptide]. It catalyses the reaction glutathione + H2O = L-cysteinylglycine + L-glutamate. It carries out the reaction an S-substituted glutathione + H2O = an S-substituted L-cysteinylglycine + L-glutamate. The enzyme catalyses leukotriene C4 + H2O = leukotriene D4 + L-glutamate. Its pathway is sulfur metabolism; glutathione metabolism. Cleaves the gamma-glutamyl bond of extracellular glutathione (gamma-Glu-Cys-Gly), glutathione conjugates, and other gamma-glutamyl compounds. The metabolism of glutathione releases free glutamate and the dipeptide cysteinyl-glycine, which is hydrolyzed to cysteine and glycine by dipeptidases. In the presence of high concentrations of dipeptides and some amino acids, can also catalyze a transpeptidation reaction, transferring the gamma-glutamyl moiety to an acceptor amino acid to form a new gamma-glutamyl compound. Initiates extracellular glutathione (GSH) breakdown, provides cells with a local cysteine supply and contributes to maintain intracellular GSH level. It is part of the cell antioxidant defense mechanism. In Arthroderma benhamiae (strain ATCC MYA-4681 / CBS 112371) (Trichophyton mentagrophytes), this protein is Glutathione hydrolase proenzyme.